A 521-amino-acid chain; its full sequence is Importin subunit alpha-3 (521 aa).

Ala-2 is subject to N-acetylalanine. The region spanning 2-58 is the IBB domain; it reads ADNEKLDNQRLKNFKNKGRDLETMRRQRNEVVVELRKNKRDEHLLKRRNVPHEDICE. The Nuclear localization signal signature appears at 43 to 52; the sequence is EHLLKRRNVP. Ser-60 carries the phosphoserine modification. The stretch at 66–106 is one ARM 1; truncated repeat; that stretch reads YRVQNTSLEAIVQNASSDNQGIQLSAVQAARKLLSSDRNPP. ARM repeat units follow at residues 107–149, 150–194, 195–233, 234–278, 279–318, 319–360, 361–400, and 401–443; these read IDDL…TSEQ, TQAV…CRDY, VISLGVVKPLLSFISPSIPITFLRNVTWVMVNLCRHKDP, PPPM…EQIQ, MVIDSGIVPHLVPLLSHQEVKVQTAALRAVGNIVTGTDEQ, TQVV…NQQQ, VQAVIDANLVPMIIHLLDKGDFGTQKEAAWAISNLTISGR, and KDQV…KMAE. The tract at residues 137-229 is NLS binding site (major); it reads WALTNIASGT…VTWVMVNLCR (93 aa). Residues 306–394 form an NLS binding site (minor) region; the sequence is RAVGNIVTGT…QKEAAWAISN (89 aa). Residues 447 to 485 form an ARM 10; atypical repeat; that stretch reads ETIGNLIEECGGLEKIEQLQNHENEDIYKLAYEIIDQFF.

This sequence belongs to the importin alpha family. As to quaternary structure, forms a complex with importin subunit beta-1 (KPNB1). Interacts with SNAI1. Interacts with TALDO1 isoform 1. Interacts with CYB1. (Microbial infection) Interacts with MERS virus protein OF4b; this interaction prevents the translocation of NF-kappa-B complex to the nucleus. In terms of assembly, (Microbial infection) Interacts with human adenovirus 5 E1A protein; this interaction allows E1A import into the host nucleus. As to quaternary structure, (Microbial infection) Interacts with Chikungunya virus capsid protein; this interaction allows the nuclear import of the viral capsid protein. In terms of tissue distribution, highly expressed in testis, ovary, small intestine, heart, skeletal muscle, lung and pancreas, but barely detectable in kidney, thymus, colon and peripheral blood leukocytes.

The protein resides in the cytoplasm. It is found in the nucleus. Functions in nuclear protein import as an adapter protein for nuclear receptor KPNB1. Binds specifically and directly to substrates containing either a simple or bipartite NLS motif. Docking of the importin/substrate complex to the nuclear pore complex (NPC) is mediated by KPNB1 through binding to nucleoporin FxFG repeats and the complex is subsequently translocated through the pore by an energy requiring, Ran-dependent mechanism. At the nucleoplasmic side of the NPC, Ran binds to importin-beta and the three components separate and importin-alpha and -beta are re-exported from the nucleus to the cytoplasm where GTP hydrolysis releases Ran from importin. The directionality of nuclear import is thought to be conferred by an asymmetric distribution of the GTP- and GDP-bound forms of Ran between the cytoplasm and nucleus. Mediates nuclear import of AARS1, MRTFA and RANBP3. Functionally, (Microbial infection) In vitro, mediates the nuclear import of human cytomegalovirus UL84 by recognizing a non-classical NLS. In vitro, mediates the nuclear import of human cytomegalovirus UL84 by recognizing a non-classical NLS. This chain is Importin subunit alpha-3, found in Homo sapiens (Human).